Here is a 108-residue protein sequence, read N- to C-terminus: uncharacterized protein (108 aa).

This is an uncharacterized protein from Methanocaldococcus jannaschii (strain ATCC 43067 / DSM 2661 / JAL-1 / JCM 10045 / NBRC 100440) (Methanococcus jannaschii).